Consider the following 339-residue polypeptide: Anthranilate phosphoribosyltransferase (339 aa).

5-phospho-alpha-D-ribose 1-diphosphate is bound by residues G78, 81–82 (GD), T86, 88–91 (NAST), 106–114 (KHGNRSVTS), and S118. An anthranilate-binding site is contributed by G78. S90 provides a ligand contact to Mg(2+). N109 is an anthranilate binding site. Anthranilate is bound at residue R164. Mg(2+) contacts are provided by D225 and E226. The segment covering 248-265 (TVAPEDVGLDRADPKDVA) has biased composition (basic and acidic residues). The interval 248 to 271 (TVAPEDVGLDRADPKDVAGADPET) is disordered.

The protein belongs to the anthranilate phosphoribosyltransferase family. In terms of assembly, homodimer. It depends on Mg(2+) as a cofactor.

It carries out the reaction N-(5-phospho-beta-D-ribosyl)anthranilate + diphosphate = 5-phospho-alpha-D-ribose 1-diphosphate + anthranilate. It participates in amino-acid biosynthesis; L-tryptophan biosynthesis; L-tryptophan from chorismate: step 2/5. Catalyzes the transfer of the phosphoribosyl group of 5-phosphorylribose-1-pyrophosphate (PRPP) to anthranilate to yield N-(5'-phosphoribosyl)-anthranilate (PRA). The sequence is that of Anthranilate phosphoribosyltransferase from Methanopyrus kandleri (strain AV19 / DSM 6324 / JCM 9639 / NBRC 100938).